Here is a 428-residue protein sequence, read N- to C-terminus: Dihydroorotase (428 aa).

Zn(2+)-binding residues include H61 and H63. Substrate contacts are provided by residues 63-65 (HLR) and N95. Zn(2+)-binding residues include D153, H180, and H233. N279 contributes to the substrate binding site. Zn(2+) is bound at residue D306. D306 is a catalytic residue. Residues H310 and 324-325 (FG) contribute to the substrate site.

The protein belongs to the metallo-dependent hydrolases superfamily. DHOase family. Class I DHOase subfamily. It depends on Zn(2+) as a cofactor.

It carries out the reaction (S)-dihydroorotate + H2O = N-carbamoyl-L-aspartate + H(+). The protein operates within pyrimidine metabolism; UMP biosynthesis via de novo pathway; (S)-dihydroorotate from bicarbonate: step 3/3. Its function is as follows. Catalyzes the reversible cyclization of carbamoyl aspartate to dihydroorotate. This Geobacillus thermodenitrificans (strain NG80-2) protein is Dihydroorotase.